A 522-amino-acid polypeptide reads, in one-letter code: MSEIWEDAIKSNAWPFVEAKKILDSLNGQIPEKGYVLFETGYGPSGLPHIGTFGENARMVMVQKAFEQLSDIPTKLICFSDDMDGLRKVPSNIPNPEMVAQYMDMPLTSIPDTFGECESYGHYMNAKLRSFLDKFGFEYEFYSSTNCYKAGMFDAMLIMVLEKYDEIMELMLPTFREERKATYSPFMPICPKTGKVLQVPIEKWDAKAGTVTYKDKAGNYIEVPVTGGHCKLQWKPDFGMRWAALKVDYEMYGKDHLANARLYSEICRILGGKPPVQLCYELFLDENGKKISKSKGNSISIDDWLKYAPVESMALFMYQNPTRAKRLFFDVIPKNVDEYITFNQKYHLEEDRAKRFANPVYHIHHGNVPKIETFGITYSLLLNLTSVCNPSDKSVLWGFISKYEPKATPNTNPYLDHLAEFAIRYYNDFIKAHKLYLSPSEKHKVILQDILDMLSDIADQTEAEAIQKAIYDIGMKAGYENLRDYFKDLYQILLGQNEGPRFGTFIKLYGVQEMKKLVEGQL.

The 'HIGH' region motif lies at 44–52; sequence PSGLPHIGT. The 'KMSKS' region motif lies at 290-294; it reads KISKS. ATP is bound at residue Lys-293.

This sequence belongs to the class-I aminoacyl-tRNA synthetase family.

Its subcellular location is the cytoplasm. The enzyme catalyses tRNA(Lys) + L-lysine + ATP = L-lysyl-tRNA(Lys) + AMP + diphosphate. The polypeptide is Lysine--tRNA ligase (Rickettsia conorii (strain ATCC VR-613 / Malish 7)).